Reading from the N-terminus, the 169-residue chain is Group 2 truncated hemoglobin 3-2 (169 aa).

Residue His99 coordinates heme b.

Belongs to the truncated hemoglobin family. Group II subfamily. Homodimer when ferric.

Hemoglobin-like protein that exhibits an unusual concentration-independent binding of O(2) and CO. Required for general plant development and during nodulation. May promote shoot organogenesis from root explants. The polypeptide is Group 2 truncated hemoglobin 3-2 (Medicago truncatula (Barrel medic)).